A 274-amino-acid chain; its full sequence is MTIDTPAREDQTLAATHRAMWALGDYALMAEEVMAPLGPILVAAAGIGPGVRVLDVAAGSGNISLPAAKTGATVISTDLTPELLQRSQARAAQQGLTLQYQEANAQALPFADDEFDTVISAIGVMFAPDHQAAADELVRVCRPGGTIGVISWTCEGFFGRMLATIRPYRPSVSADLPPSALWGREAYVTGLLGDGVTGLKTARGLLEVKRFDTAQAVHDYFKNNYGPTIEAYAHIGDNAVLAAELDRQLVELAAQYLSDGVMEWEYLLLTAEKR.

The N-terminal stretch at 1 to 30 (MTIDTPAREDQTLAATHRAMWALGDYALMA) is a signal peptide.

This sequence to M.tuberculosis Rv1403c.

This is an uncharacterized protein from Mycobacterium bovis (strain ATCC BAA-935 / AF2122/97).